Reading from the N-terminus, the 218-residue chain is 3,4-dihydroxy-2-butanone 4-phosphate synthase (218 aa).

D-ribulose 5-phosphate contacts are provided by residues R38 to E39, D43, R151 to T155, and E175. Residue E39 coordinates Mg(2+). A Mg(2+)-binding site is contributed by H154.

It belongs to the DHBP synthase family. As to quaternary structure, homodimer. Mg(2+) serves as cofactor. The cofactor is Mn(2+).

It catalyses the reaction D-ribulose 5-phosphate = (2S)-2-hydroxy-3-oxobutyl phosphate + formate + H(+). It functions in the pathway cofactor biosynthesis; riboflavin biosynthesis; 2-hydroxy-3-oxobutyl phosphate from D-ribulose 5-phosphate: step 1/1. In terms of biological role, catalyzes the conversion of D-ribulose 5-phosphate to formate and 3,4-dihydroxy-2-butanone 4-phosphate. The protein is 3,4-dihydroxy-2-butanone 4-phosphate synthase of Vibrio vulnificus (strain CMCP6).